A 1123-amino-acid polypeptide reads, in one-letter code: Telomerase reverse transcriptase (1123 aa).

2 disordered regions span residues 191–242 (ENKR…KTTK) and 410–439 (GTTSQSSRRQKADKLPHGSSSSQTGKPKCP). Residues 201–210 (QPPTKRQWLS) are compositionally biased toward polar residues. Residues 596 to 929 (LVDDAEAESS…PFVRWTGLLI (334 aa)) enclose the Reverse transcriptase domain. Mg(2+) is bound by residues D691, D860, and D861.

The protein belongs to the reverse transcriptase family. Telomerase subfamily. As to quaternary structure, component of the telomerase ribonucleoprotein complex. Interacts with POT1A.

Its subcellular location is the nucleus. The protein resides in the chromosome. It localises to the telomere. It carries out the reaction DNA(n) + a 2'-deoxyribonucleoside 5'-triphosphate = DNA(n+1) + diphosphate. Telomerase is a ribonucleoprotein enzyme essential for the replication of chromosome termini in most eukaryotes. It elongates telomeres. It is a reverse transcriptase that adds simple sequence repeats to chromosome ends by copying a template sequence within the RNA component of the enzyme. Required to prevent genome instability induced by breakage-fusion-bridge (BFB) cycles. Can extend completely non-telomeric sequences using RNA template in vitro. The sequence is that of Telomerase reverse transcriptase (TERT) from Arabidopsis thaliana (Mouse-ear cress).